The chain runs to 598 residues: Arginine--tRNA ligase (598 aa).

The 'HIGH' region motif lies at 140-150; sequence ANPTGPLHVGH.

The protein belongs to the class-I aminoacyl-tRNA synthetase family. Monomer.

It is found in the cytoplasm. It carries out the reaction tRNA(Arg) + L-arginine + ATP = L-arginyl-tRNA(Arg) + AMP + diphosphate. This Synechococcus sp. (strain JA-3-3Ab) (Cyanobacteria bacterium Yellowstone A-Prime) protein is Arginine--tRNA ligase.